We begin with the raw amino-acid sequence, 551 residues long: Putative transport protein CGSHiEE_03135 (551 aa).

Helical transmembrane passes span 4–24 (IAIT…IGHW), 28–48 (GVGL…HFTD), 65–85 (FGLI…FFSS), 95–115 (AFAI…HKIA), and 157–177 (VSYA…MWLI). RCK C-terminal domains follow at residues 191-275 (RFNA…IIGY) and 277-360 (VDAP…VIGN). 6 helical membrane-spanning segments follow: residues 370–390 (MLPV…PFYI), 402–424 (AGGP…LYWF), 438–458 (IVLF…DTLV), 463–483 (LEWM…AGTI), 492–512 (YLTI…LAFA), and 529–549 (VYPL…VLLW).

Belongs to the AAE transporter (TC 2.A.81) family. YidE subfamily.

It localises to the cell membrane. The chain is Putative transport protein CGSHiEE_03135 from Haemophilus influenzae (strain PittEE).